Reading from the N-terminus, the 64-residue chain is Large ribosomal subunit protein bL32 (64 aa).

It belongs to the bacterial ribosomal protein bL32 family.

In Bifidobacterium longum (strain DJO10A), this protein is Large ribosomal subunit protein bL32.